A 148-amino-acid polypeptide reads, in one-letter code: MLIEKIMGNIAHEEEHHEKKTEWIELEWEELSKRILRTETDQGTDIALRLEGDEPLKYGDLLWEDEHRRIAIRTKLEPVIVITPNDMHEMGKSAFELGNRHTPCLIENNEIIVRADHTINPLLDEIGVHYETTERRFKQPFKYRGHSH.

It belongs to the UreE family.

It localises to the cytoplasm. Functionally, involved in urease metallocenter assembly. Binds nickel. Probably functions as a nickel donor during metallocenter assembly. This is Urease accessory protein UreE from Lysinibacillus sphaericus (strain C3-41).